A 5162-amino-acid chain; its full sequence is Linear gramicidin synthase subunit B (5162 aa).

Carrier domains follow at residues 963–1038 (APRN…QALR), 2027–2101 (EPQS…VVLE), 3541–3616 (APRN…GAIG), and 4601–4675 (AATS…GQST). O-(pantetheine 4'-phosphoryl)serine occurs at positions 998, 2062, 3576, and 4636.

Belongs to the ATP-dependent AMP-binding enzyme family. As to quaternary structure, large multienzyme complex composed of 4 subunits; LgrA, LgrB, LgrC and LgrD. Requires pantetheine 4'-phosphate as cofactor.

In terms of biological role, activates the 3rd to 6th amino acids (Ala, D-Leu, Ala and D-Val) in linear gramicidin and catalyzes the formation of the peptide bond between them. This enzyme is also responsible for the epimerization of the 4th (D-Leu) and the 6th (D-Val) amino acids. The chain is Linear gramicidin synthase subunit B (lgrB) from Brevibacillus parabrevis.